Here is a 363-residue protein sequence, read N- to C-terminus: Peptide chain release factor 1 (363 aa).

Gln-237 is subject to N5-methylglutamine. Residues 284–296 (EDEKRRSAEESTR) are compositionally biased toward basic and acidic residues. Residues 284–305 (EDEKRRSAEESTRRSLVASGDR) are disordered.

The protein belongs to the prokaryotic/mitochondrial release factor family. Post-translationally, methylated by PrmC. Methylation increases the termination efficiency of RF1.

The protein resides in the cytoplasm. Functionally, peptide chain release factor 1 directs the termination of translation in response to the peptide chain termination codons UAG and UAA. The sequence is that of Peptide chain release factor 1 from Shewanella baltica (strain OS195).